Here is a 403-residue protein sequence, read N- to C-terminus: tRNA pseudouridine synthase 4 (403 aa).

Asp75 serves as the catalytic Nucleophile.

This sequence belongs to the pseudouridine synthase TruB family.

The protein resides in the nucleus. Its subcellular location is the mitochondrion. It carries out the reaction uridine(55) in tRNA = pseudouridine(55) in tRNA. The enzyme catalyses a uridine in mRNA = a pseudouridine in mRNA. Functionally, responsible for synthesis of pseudouridine from uracil-55 in the psi GC loop of transfer RNAs. Also catalyzes pseudouridylation of mRNAs with the consensus sequence 5'-GGUUCRA-3'. This Saccharomyces cerevisiae (strain ATCC 204508 / S288c) (Baker's yeast) protein is tRNA pseudouridine synthase 4 (PUS4).